Reading from the N-terminus, the 306-residue chain is Ornithine carbamoyltransferase (306 aa).

Carbamoyl phosphate contacts are provided by residues 46–49 (STRT), Gln-73, Arg-97, and 124–127 (HPTQ). L-ornithine-binding positions include Asn-156, Asp-220, and 224–225 (SM). Carbamoyl phosphate-binding positions include 260–261 (CL) and Arg-288.

This sequence belongs to the aspartate/ornithine carbamoyltransferase superfamily. OTCase family.

Its subcellular location is the cytoplasm. The enzyme catalyses carbamoyl phosphate + L-ornithine = L-citrulline + phosphate + H(+). The protein operates within amino-acid biosynthesis; L-arginine biosynthesis; L-arginine from L-ornithine and carbamoyl phosphate: step 1/3. In terms of biological role, reversibly catalyzes the transfer of the carbamoyl group from carbamoyl phosphate (CP) to the N(epsilon) atom of ornithine (ORN) to produce L-citrulline. In Campylobacter jejuni subsp. jejuni serotype O:23/36 (strain 81-176), this protein is Ornithine carbamoyltransferase.